A 769-amino-acid polypeptide reads, in one-letter code: Sensor protein DivL (769 aa).

The chain crosses the membrane as a helical span at residues Leu6–His26. The region spanning Asn547–Gln758 is the Histidine kinase domain. Tyr550 carries the post-translational modification Phosphotyrosine; by autocatalysis.

Post-translationally, autophosphorylated.

The protein localises to the cell membrane. The enzyme catalyses ATP + protein L-histidine = ADP + protein N-phospho-L-histidine.. In terms of biological role, required for cell division and growth. It catalyzes the phosphorylation of CtrA and activates transcription in vitro of the cell cycle-regulated fliF promoter. The chain is Sensor protein DivL (divL) from Caulobacter vibrioides (strain ATCC 19089 / CIP 103742 / CB 15) (Caulobacter crescentus).